The primary structure comprises 426 residues: Glutamate-1-semialdehyde 2,1-aminomutase (426 aa).

Lysine 268 bears the N6-(pyridoxal phosphate)lysine mark.

Belongs to the class-III pyridoxal-phosphate-dependent aminotransferase family. HemL subfamily. Pyridoxal 5'-phosphate is required as a cofactor.

The protein resides in the cytoplasm. The enzyme catalyses (S)-4-amino-5-oxopentanoate = 5-aminolevulinate. It participates in porphyrin-containing compound metabolism; protoporphyrin-IX biosynthesis; 5-aminolevulinate from L-glutamyl-tRNA(Glu): step 2/2. The chain is Glutamate-1-semialdehyde 2,1-aminomutase from Saccharolobus islandicus (strain Y.N.15.51 / Yellowstone #2) (Sulfolobus islandicus).